Reading from the N-terminus, the 360-residue chain is Ribosomal RNA large subunit methyltransferase M (360 aa).

S-adenosyl-L-methionine contacts are provided by residues Ser-187, 220–223, Asp-239, Asp-259, and Asp-276; that span reads CPGG. The active-site Proton acceptor is the Lys-305.

The protein belongs to the class I-like SAM-binding methyltransferase superfamily. RNA methyltransferase RlmE family. RlmM subfamily. As to quaternary structure, monomer.

It localises to the cytoplasm. It carries out the reaction cytidine(2498) in 23S rRNA + S-adenosyl-L-methionine = 2'-O-methylcytidine(2498) in 23S rRNA + S-adenosyl-L-homocysteine + H(+). Functionally, catalyzes the 2'-O-methylation at nucleotide C2498 in 23S rRNA. The protein is Ribosomal RNA large subunit methyltransferase M of Shewanella sediminis (strain HAW-EB3).